The following is a 485-amino-acid chain: Arginine/ornithine antiporter ArcD (485 aa).

11 helical membrane passes run A23–L43, P48–W68, I79–W99, L116–I136, I148–I168, M203–L223, G246–I266, Y269–I289, L323–L343, S362–A382, and V441–M461.

The protein belongs to the NhaC Na(+)/H(+) (TC 2.A.35) antiporter family.

It is found in the cell membrane. The catalysed reaction is L-ornithine(in) + L-arginine(out) = L-ornithine(out) + L-arginine(in). In terms of biological role, uptake of arginine from the medium in exchange for ornithine. The polypeptide is Arginine/ornithine antiporter ArcD (arcD) (Halobacterium salinarum (strain ATCC 700922 / JCM 11081 / NRC-1) (Halobacterium halobium)).